A 250-amino-acid polypeptide reads, in one-letter code: Acetylglutamate kinase (250 aa).

Substrate is bound by residues 41-42 (GG), R63, and N156.

The protein belongs to the acetylglutamate kinase family. ArgB subfamily.

It localises to the cytoplasm. The catalysed reaction is N-acetyl-L-glutamate + ATP = N-acetyl-L-glutamyl 5-phosphate + ADP. It participates in amino-acid biosynthesis; L-arginine biosynthesis; N(2)-acetyl-L-ornithine from L-glutamate: step 2/4. In terms of biological role, catalyzes the ATP-dependent phosphorylation of N-acetyl-L-glutamate. This is Acetylglutamate kinase from Listeria welshimeri serovar 6b (strain ATCC 35897 / DSM 20650 / CCUG 15529 / CIP 8149 / NCTC 11857 / SLCC 5334 / V8).